We begin with the raw amino-acid sequence, 271 residues long: Type III pantothenate kinase (271 aa).

Residue 6–13 (DVRNTHTV) participates in ATP binding. Substrate is bound at residue 109 to 112 (GADR). Aspartate 111 acts as the Proton acceptor in catalysis. K(+) is bound at residue aspartate 131. Serine 134 provides a ligand contact to ATP. Residue threonine 186 participates in substrate binding.

This sequence belongs to the type III pantothenate kinase family. As to quaternary structure, homodimer. It depends on NH4(+) as a cofactor. The cofactor is K(+).

The protein resides in the cytoplasm. It catalyses the reaction (R)-pantothenate + ATP = (R)-4'-phosphopantothenate + ADP + H(+). The protein operates within cofactor biosynthesis; coenzyme A biosynthesis; CoA from (R)-pantothenate: step 1/5. Catalyzes the phosphorylation of pantothenate (Pan), the first step in CoA biosynthesis. This Mycolicibacterium vanbaalenii (strain DSM 7251 / JCM 13017 / BCRC 16820 / KCTC 9966 / NRRL B-24157 / PYR-1) (Mycobacterium vanbaalenii) protein is Type III pantothenate kinase.